The primary structure comprises 372 residues: 4-hydroxy-3-methylbut-2-en-1-yl diphosphate synthase (flavodoxin) (372 aa).

[4Fe-4S] cluster-binding residues include Cys270, Cys273, Cys305, and Glu312.

This sequence belongs to the IspG family. [4Fe-4S] cluster serves as cofactor.

It catalyses the reaction (2E)-4-hydroxy-3-methylbut-2-enyl diphosphate + oxidized [flavodoxin] + H2O + 2 H(+) = 2-C-methyl-D-erythritol 2,4-cyclic diphosphate + reduced [flavodoxin]. It functions in the pathway isoprenoid biosynthesis; isopentenyl diphosphate biosynthesis via DXP pathway; isopentenyl diphosphate from 1-deoxy-D-xylulose 5-phosphate: step 5/6. Functionally, converts 2C-methyl-D-erythritol 2,4-cyclodiphosphate (ME-2,4cPP) into 1-hydroxy-2-methyl-2-(E)-butenyl 4-diphosphate. This chain is 4-hydroxy-3-methylbut-2-en-1-yl diphosphate synthase (flavodoxin), found in Escherichia coli O139:H28 (strain E24377A / ETEC).